Reading from the N-terminus, the 158-residue chain is Cyclic pyranopterin monophosphate synthase (158 aa).

Substrate contacts are provided by residues 75-77 (LCH) and 113-114 (ME). Asp-128 is a catalytic residue.

The protein belongs to the MoaC family. In terms of assembly, homohexamer; trimer of dimers.

It carries out the reaction (8S)-3',8-cyclo-7,8-dihydroguanosine 5'-triphosphate = cyclic pyranopterin phosphate + diphosphate. It functions in the pathway cofactor biosynthesis; molybdopterin biosynthesis. Functionally, catalyzes the conversion of (8S)-3',8-cyclo-7,8-dihydroguanosine 5'-triphosphate to cyclic pyranopterin monophosphate (cPMP). This is Cyclic pyranopterin monophosphate synthase from Paraburkholderia phytofirmans (strain DSM 17436 / LMG 22146 / PsJN) (Burkholderia phytofirmans).